Here is a 356-residue protein sequence, read N- to C-terminus: Tyrosine recombinase XerS (356 aa).

The region spanning 16–121 (IMPWYVLDYY…ALSSLYKYLT (106 aa)) is the Core-binding (CB) domain. The 186-residue stretch at 169-354 (AFLDYVDKEY…VNDEQKNALD (186 aa)) folds into the Tyr recombinase domain. Catalysis depends on residues R210, K234, H306, R309, and H332. The active-site O-(3'-phospho-DNA)-tyrosine intermediate is the Y341.

The protein belongs to the 'phage' integrase family. XerS subfamily.

It is found in the cytoplasm. With respect to regulation, ftsK is required for recombination. Its function is as follows. Site-specific tyrosine recombinase, which acts by catalyzing the cutting and rejoining of the recombining DNA molecules. Essential to convert dimers of the bacterial chromosome into monomers to permit their segregation at cell division. In Streptococcus pyogenes serotype M2 (strain MGAS10270), this protein is Tyrosine recombinase XerS.